The primary structure comprises 513 residues: rRNA N(6)-adenosine-methyltransferase ZCCHC4 (513 aa).

Residues cysteine 40, histidine 42, cysteine 64, cysteine 73, cysteine 125, cysteine 128, histidine 140, and histidine 143 each contribute to the Zn(2+) site. A GRF-type zinc finger spans residues 40–82; sequence CPHGPTLLFVKVTQGKEETRRFYACSACRDRKDCNFFQWEDEK. S-adenosyl-L-methionine contacts are provided by residues 172–175, arginine 202, aspartate 225, 243–244, and aspartate 276; these read QYLF and NM. The tract at residues 337–357 is regulatory loop; the sequence is QVDYDNHALYKHGKTGRKQSP. Zn(2+) is bound by residues cysteine 380, cysteine 383, histidine 393, cysteine 394, cysteine 397, cysteine 400, histidine 410, cysteine 411, cysteine 414, cysteine 417, histidine 424, cysteine 425, cysteine 428, cysteine 431, histidine 436, and cysteine 438. The DHHC domain maps to 395–447; sequence ELCNSCTSKDGRKWNHCFLCKKCVKPSWIHCSICNHCAVPDHSCEGPKHGCFI. The CCHC-type zinc-finger motif lies at 443–460; it reads HGCFICGELDHKRSTCPN. Residues 466–481 show a composition bias toward basic residues; it reads RANKAVRKQKQRKSNK. Residues 466 to 513 are disordered; that stretch reads RANKAVRKQKQRKSNKMKMETTKGQSMNHTSATRRKKRRERAHQYLGS. Residues 487–496 are compositionally biased toward polar residues; that stretch reads TKGQSMNHTS. Over residues 497 to 506 the composition is skewed to basic residues; that stretch reads ATRRKKRRER.

This sequence belongs to the ZCCHC4 family. Interacts with components of the ASC-1 complex TRIP4, ASCC1, ASCC2 and ASCC3. Interact with AHCYL1 and AHCYL2. Interact with YTHDC2.

It localises to the nucleus. Its subcellular location is the nucleolus. The protein localises to the cytoplasm. It catalyses the reaction adenosine(4220) in 28S rRNA + S-adenosyl-L-methionine = N(6)-methyladenosine(4220) in 28S rRNA + S-adenosyl-L-homocysteine + H(+). RRNA N6-methyltransferase that specifically methylates the adenine in position 4220 of 28S rRNA. N6-methylation of adenine(4220) in 28S rRNA is required for translation. This is rRNA N(6)-adenosine-methyltransferase ZCCHC4 from Homo sapiens (Human).